A 1095-amino-acid polypeptide reads, in one-letter code: Solute carrier family 12 member 1 (1095 aa).

Residues 1-173 lie on the Cytoplasmic side of the membrane; the sequence is MSVNIPSNSV…EEDVTGVVKF (173 aa). The RFXV motif motif lies at 16–19; that stretch reads RFQV. The interval 26 to 45 is disordered; the sequence is HGSGAAMSDSTDPPHYEETS. A phosphoserine mark is found at serine 57 and serine 87. Threonine 91, threonine 96, threonine 101, and threonine 114 each carry phosphothreonine. Serine 116 bears the Phosphoserine mark. Serine 126 is subject to Phosphoserine; by AMPK. At serine 144 the chain carries Phosphoserine. A helical membrane pass occupies residues 174 to 194; sequence GWVKGVLVRCMLNIWGVMLFI. Over 195 to 197 the chain is Extracellular; sequence RLS. Residues 198–218 traverse the membrane as a helical segment; it reads WIVGEAGIGLGVIIIGLSVVV. Over 219–255 the chain is Cytoplasmic; the sequence is TTLTGISMSAICTNGVVRGGGAYYLISRSLGPEFGGS. Residues 256-276 form a helical membrane-spanning segment; sequence IGLIFRFANAVRVAMYVVGFA. Topologically, residues 277–298 are extracellular; that stretch reads ETVVDLLKESDSMMVDPTNDIR. Residues 299–319 form a helical membrane-spanning segment; sequence IIGSITVVILLGISVAGMEWE. Over 320 to 323 the chain is Cytoplasmic; that stretch reads AKAQ. A helical membrane pass occupies residues 324–344; sequence VILLVILLIGIANFFIGTVIP. Residues 345-375 are Extracellular-facing; it reads SNNEKKSRGFFNYQASIFAENFGPSFTEGEG. A helical membrane pass occupies residues 376-396; sequence FFSVFAIFFPAATGILAGANI. At 397-413 the chain is on the cytoplasmic side; sequence SGDLEDPQDAIPRGTML. The chain crosses the membrane as a helical span at residues 414–434; that stretch reads AIFITTVAYIGVAICVRACVV. The Extracellular portion of the chain corresponds to 435–546; the sequence is RDATGSMNDT…NNEPLRGYFL (112 aa). Asparagine 442 and asparagine 452 each carry an N-linked (GlcNAc...) asparagine glycan. 2 helical membrane-spanning segments follow: residues 547 to 567 and 568 to 588; these read TFVI…APII and SNFF…ASYA. Topologically, residues 589-605 are extracellular; it reads KSPGWRPAYGIYNMWVS. The chain crosses the membrane as a helical span at residues 606-626; it reads LFGAILCCAVMFVINWWAAVI. The Cytoplasmic segment spans residues 627–1095; it reads TYVIELFLYI…NHKNVLTFYS (469 aa).

This sequence belongs to the SLC12A transporter family. In terms of assembly, when phosphorylated, interacts with PPP3CB. Post-translationally, phosphorylated at Ser-87, Thr-96 and Thr-101 by OXSR1/OSR1 and STK39/SPAK downstream of WNK kinases (WNK1, WNK2, WNK3 or WNK4), promoting its activity. Expressed predominantly in kidney (at protein level).

The protein resides in the apical cell membrane. The enzyme catalyses K(+)(out) + 2 chloride(out) + Na(+)(out) = K(+)(in) + 2 chloride(in) + Na(+)(in). With respect to regulation, activated following phosphorylation by OXSR1/OSR1 and STK39/SPAK downstream of WNK kinases (WNK1, WNK2, WNK3 or WNK4). In terms of biological role, renal sodium, potassium and chloride ion cotransporter that mediates the transepithelial NaCl reabsorption in the thick ascending limb and plays an essential role in the urinary concentration and volume regulation. Electrically silent transporter system. The protein is Solute carrier family 12 member 1 (Slc12a1) of Rattus norvegicus (Rat).